A 975-amino-acid polypeptide reads, in one-letter code: Nesprin-3 (975 aa).

At 1 to 925 the chain is on the cytoplasmic side; sequence MTQQPQEDFE…PCSLLQKACR (925 aa). Spectrin repeat units follow at residues 220–325 and 647–740; these read QDHE…RLRG and REHC…QALR. The interval 778 to 798 is disordered; the sequence is LINPQDPIPRRQHGANPLEGH. Residues 917-975 form the KASH domain; sequence CSLLQKACRVALPLQLLLLLFLLLLFLLPAGEEERSCALANNFARSFALMLRYNGPPPT. A helical; Anchor for type IV membrane protein transmembrane segment spans residues 926–946; that stretch reads VALPLQLLLLLFLLLLFLLPA. At 947-975 the chain is on the perinuclear space side; sequence GEEERSCALANNFARSFALMLRYNGPPPT.

The protein belongs to the nesprin family. Core component of LINC complexes which are composed of inner nuclear membrane SUN domain-containing proteins coupled to outer nuclear membrane KASH domain-containing nesprins. SUN and KASH domain-containing proteins seem to bind each other promiscuously; however, differentially expression of LINC complex constituents can give rise to specific assemblies. Interacts with SUN1 and SUN2; probably forming respective LINC complexes. Interacts with PLEC (via actin-binding domain). Interacts with DST. Interacts with SYNE1. Interacts (via KASH domain) with TOR1A (ATP-bound); the interaction is required for SYNE3 nuclear envelope localization. In terms of processing, the disulfid bond with SUN1 or SUN2 is required for stability of the respective LINC complex under tensile forces. In terms of tissue distribution, ubiquitous.

Its subcellular location is the nucleus outer membrane. It is found in the nucleus envelope. It localises to the rough endoplasmic reticulum. In terms of biological role, as a component of the LINC (LInker of Nucleoskeleton and Cytoskeleton) complex involved in the connection between the nuclear lamina and the cytoskeleton. The nucleocytoplasmic interactions established by the LINC complex play an important role in the transmission of mechanical forces across the nuclear envelope and in nuclear movement and positioning. Probable anchoring protein which tethers the nucleus to the cytoskeleton by binding PLEC which can associate with the intermediate filament system. Plays a role in the regulation of aortic epithelial cell morphology, and is required for flow-induced centrosome polarization and directional migration in aortic endothelial cells. This is Nesprin-3 (Syne3) from Mus musculus (Mouse).